The chain runs to 41 residues: Large ribosomal subunit protein bL36B (41 aa).

The protein belongs to the bacterial ribosomal protein bL36 family.

This is Large ribosomal subunit protein bL36B from Haemophilus ducreyi (strain 35000HP / ATCC 700724).